The chain runs to 138 residues: Large ribosomal subunit protein uL16c (138 aa).

This sequence belongs to the universal ribosomal protein uL16 family. In terms of assembly, part of the 50S ribosomal subunit.

Its subcellular location is the plastid. It is found in the chloroplast. The polypeptide is Large ribosomal subunit protein uL16c (Phaeodactylum tricornutum (strain CCAP 1055/1)).